Here is a 145-residue protein sequence, read N- to C-terminus: Ribonuclease H (145 aa).

The 141-residue stretch at 1 to 141 (MQEVTIYSDG…ADALANRGVE (141 aa)) folds into the RNase H type-1 domain. Mg(2+) contacts are provided by aspartate 9, glutamate 47, aspartate 69, and aspartate 133.

It belongs to the RNase H family. In terms of assembly, monomer. Requires Mg(2+) as cofactor.

Its subcellular location is the cytoplasm. It catalyses the reaction Endonucleolytic cleavage to 5'-phosphomonoester.. Its function is as follows. Endonuclease that specifically degrades the RNA of RNA-DNA hybrids. This Cupriavidus necator (strain ATCC 17699 / DSM 428 / KCTC 22496 / NCIMB 10442 / H16 / Stanier 337) (Ralstonia eutropha) protein is Ribonuclease H.